The following is a 207-amino-acid chain: Ribosome maturation factor RimM (207 aa).

The 94-residue stretch at 114 to 207 (DDEYYWVDLI…RIDSDWPLDY (94 aa)) folds into the PRC barrel domain.

It belongs to the RimM family. Binds ribosomal protein uS19.

The protein resides in the cytoplasm. An accessory protein needed during the final step in the assembly of 30S ribosomal subunit, possibly for assembly of the head region. Essential for efficient processing of 16S rRNA. May be needed both before and after RbfA during the maturation of 16S rRNA. It has affinity for free ribosomal 30S subunits but not for 70S ribosomes. The chain is Ribosome maturation factor RimM from Bordetella bronchiseptica (strain ATCC BAA-588 / NCTC 13252 / RB50) (Alcaligenes bronchisepticus).